The sequence spans 261 residues: Thiamine thiazole synthase (261 aa).

NAD(+)-binding positions include A33, 52-53, G60, V124, and 152-154; these read ER and HVD. Residues D154 and H169 each contribute to the Fe cation site. Residue I219 coordinates NAD(+). Position 229 (R229) interacts with glycine.

The protein belongs to the THI4 family. Homooctamer; tetramer of dimers. Fe(2+) is required as a cofactor.

The catalysed reaction is hydrogen sulfide + glycine + NAD(+) = ADP-5-ethyl-4-methylthiazole-2-carboxylate + nicotinamide + 3 H2O + H(+). The protein operates within cofactor biosynthesis; thiamine diphosphate biosynthesis. Functionally, involved in the biosynthesis of the thiazole moiety of thiamine. Catalyzes the conversion of NAD and glycine to adenosine diphosphate 5-(2-hydroxyethyl)-4-methylthiazole-2-carboxylate (ADT), an adenylated thiazole intermediate, using free sulfide as a source of sulfur. The chain is Thiamine thiazole synthase from Pyrobaculum aerophilum (strain ATCC 51768 / DSM 7523 / JCM 9630 / CIP 104966 / NBRC 100827 / IM2).